The following is a 340-amino-acid chain: Protein RecA (340 aa).

Residue 65 to 72 (GPESGGKT) coordinates ATP.

Belongs to the RecA family.

It is found in the cytoplasm. Functionally, can catalyze the hydrolysis of ATP in the presence of single-stranded DNA, the ATP-dependent uptake of single-stranded DNA by duplex DNA, and the ATP-dependent hybridization of homologous single-stranded DNAs. It interacts with LexA causing its activation and leading to its autocatalytic cleavage. This Thermus aquaticus protein is Protein RecA.